The chain runs to 545 residues: Serine/threonine-protein kinase PAK 1 (545 aa).

The tract at residues 1–75 (MSNNGVDIQD…KKREKERPEI (75 aa)) is disordered. Ser2 carries the N-acetylserine modification. A Phosphoserine; by PKB and autocatalysis modification is found at Ser21. Ser57 carries the post-translational modification Phosphoserine; by autocatalysis. The tract at residues 70 to 140 (KERPEISLPS…YNSKKTSNSK (71 aa)) is autoregulatory region. The CRIB domain occupies 75-88 (ISLPSDFEHTIHVG). Positions 75-105 (ISLPSDFEHTIHVGFDAVTGEFTGMPEQWAR) are GTPase-binding. Phosphothreonine; by OXSR1 is present on Thr84. A Phosphoserine modification is found at Ser115. Tyr131 and Tyr142 each carry phosphotyrosine. Phosphoserine; by autocatalysis occurs at positions 144 and 149. A disordered region spans residues 150-198 (AEDYNSSNTLNVKTVSETPAVPPVSEDDEDDDDDATPPPVIAPRPEHTK). The span at 152–166 (DYNSSNTLNVKTVSE) shows a compositional bias: polar residues. The residue at position 153 (Tyr153) is a Phosphotyrosine; by JAK2. Ser174 carries the phosphoserine modification. The segment covering 174-184 (SEDDEDDDDDA) has biased composition (acidic residues). Thr185 carries the phosphothreonine modification. Position 199 is a phosphoserine; by autocatalysis (Ser199). Tyr201 carries the post-translational modification Phosphotyrosine; by JAK2. Phosphoserine; by autocatalysis is present on Ser204. Positions 210–250 (PVTPTRDVATSPISPTENNTTPPDALTRNTEKQKKKPKMSD) are disordered. Residues Thr212 and Thr219 each carry the phosphothreonine modification. 2 positions are modified to phosphoserine: Ser220 and Ser223. The span at 220–231 (SPISPTENNTTP) shows a compositional bias: polar residues. Phosphothreonine is present on residues Thr225, Thr229, and Thr230. Positions 270-521 (YTPFEKIGQG…AKELLQHQFL (252 aa)) constitute a Protein kinase domain. 276 to 284 (IGQGASGTV) is a binding site for ATP. Phosphotyrosine; by JAK2 is present on Tyr285. Lys299 contacts ATP. Catalysis depends on Asp389, which acts as the Proton acceptor. Thr423 bears the Phosphothreonine; by autocatalysis, BRSK2 and PDPK1 mark.

Belongs to the protein kinase superfamily. STE Ser/Thr protein kinase family. STE20 subfamily. As to quaternary structure, homodimer in its autoinhibited state. Active as monomer. Interacts with GIT1. Component of cytoplasmic complexes, which also contains PXN, ARHGEF7 and GIT1. Interacts with NISCH. Interacts with DVL1; mediates the formation of a DVL1, MUSK and PAK1 ternary complex involved in AChR clustering. Binds to the caspase-cleaved p110 isoform of CDC2L1 and CDC2L2, p110C, but not the full-length proteins. Interacts with ARHGEF7. Interacts tightly with GTP-bound but not GDP-bound CDC42/P21 and RAC1. Interacts with SCRIB. Interacts with PDPK1. Interacts (via kinase domain) with RAF1. Interacts with NCK1 and NCK2. Interacts with TBCB. Interacts with BRSK2. Interacts with SNAI1. Interacts with CIB1 (via N-terminal region); the interaction is direct, promotes PAK1 activity and occurs in a calcium-dependent manner. Interacts with INPP5K. Interacts with gamma-tubulin. Interacts with RHOU; the interaction promotes PAK1 activation. Mg(2+) is required as a cofactor. In terms of processing, autophosphorylated in trans, meaning that in a dimer, one kinase molecule phosphorylates the other one. Activated by autophosphorylation at Thr-423 in response to a conformation change, triggered by interaction with GTP-bound CDC42 or RAC1. Activated by phosphorylation at Thr-423 by BRSK2 and by PDPK1. Phosphorylated by JAK2 in response to PRL; this increases PAK1 kinase activity. Phosphorylated at Ser-21 by PKB/AKT; this reduces interaction with NCK1 and association with focal adhesion sites. Upon DNA damage, phosphorylated at Thr-212 and translocates to the nucleoplasm. Phosphorylated at tyrosine residues, which can be enhanced by NTN1.

Its subcellular location is the cytoplasm. The protein resides in the cell junction. The protein localises to the focal adhesion. It localises to the cell projection. It is found in the lamellipodium. Its subcellular location is the cell membrane. The protein resides in the ruffle membrane. The protein localises to the invadopodium. It localises to the nucleus. It is found in the nucleoplasm. Its subcellular location is the chromosome. The protein resides in the cytoskeleton. The protein localises to the microtubule organizing center. It localises to the centrosome. The enzyme catalyses L-seryl-[protein] + ATP = O-phospho-L-seryl-[protein] + ADP + H(+). It carries out the reaction L-threonyl-[protein] + ATP = O-phospho-L-threonyl-[protein] + ADP + H(+). With respect to regulation, phosphorylation of Thr-84 by OXSR1 inhibits activation. Activated by binding small G proteins. Binding of GTP-bound CDC42 or RAC1 to the autoregulatory region releases monomers from the autoinhibited dimer, and enables activation by phosphorylation of Thr-423. In terms of biological role, protein kinase involved in intracellular signaling pathways downstream of integrins and receptor-type kinases that plays an important role in cytoskeleton dynamics, in cell adhesion, migration, proliferation, apoptosis, mitosis, and in vesicle-mediated transport processes. Can directly phosphorylate BAD and protects cells against apoptosis. Activated by interaction with CDC42 and RAC1. Functions as a GTPase effector that links the Rho-related GTPases CDC42 and RAC1 to the JNK MAP kinase pathway. Phosphorylates and activates MAP2K1, and thereby mediates activation of downstream MAP kinases. Involved in the reorganization of the actin cytoskeleton, actin stress fibers and of focal adhesion complexes. Phosphorylates the tubulin chaperone TBCB and thereby plays a role in the regulation of microtubule biogenesis and organization of the tubulin cytoskeleton. Plays a role in the regulation of insulin secretion in response to elevated glucose levels. Part of a ternary complex that contains PAK1, DVL1 and MUSK that is important for MUSK-dependent regulation of AChR clustering during the formation of the neuromuscular junction (NMJ). Activity is inhibited in cells undergoing apoptosis, potentially due to binding of CDC2L1 and CDC2L2. Phosphorylates MYL9/MLC2. Phosphorylates RAF1 at 'Ser-338' and 'Ser-339' resulting in: activation of RAF1, stimulation of RAF1 translocation to mitochondria, phosphorylation of BAD by RAF1, and RAF1 binding to BCL2. Phosphorylates SNAI1 at 'Ser-246' promoting its transcriptional repressor activity by increasing its accumulation in the nucleus. In podocytes, promotes NR3C2 nuclear localization. Required for atypical chemokine receptor ACKR2-induced phosphorylation of LIMK1 and cofilin (CFL1) and for the up-regulation of ACKR2 from endosomal compartment to cell membrane, increasing its efficiency in chemokine uptake and degradation. In synapses, seems to mediate the regulation of F-actin cluster formation performed by SHANK3, maybe through CFL1 phosphorylation and inactivation. Plays a role in RUFY3-mediated facilitating gastric cancer cells migration and invasion. In response to DNA damage, phosphorylates MORC2 which activates its ATPase activity and facilitates chromatin remodeling. In neurons, plays a crucial role in regulating GABA(A) receptor synaptic stability and hence GABAergic inhibitory synaptic transmission through its role in F-actin stabilization. In hippocampal neurons, necessary for the formation of dendritic spines and excitatory synapses; this function is dependent on kinase activity and may be exerted by the regulation of actomyosin contractility through the phosphorylation of myosin II regulatory light chain (MLC). Along with GIT1, positively regulates microtubule nucleation during interphase. Phosphorylates FXR1, promoting its localization to stress granules and activity. Phosphorylates ILK on 'Thr-173' and 'Ser-246', promoting nuclear export of ILK. This is Serine/threonine-protein kinase PAK 1 from Mus musculus (Mouse).